Consider the following 356-residue polypeptide: MRGRVLSFTLFGESHGKGVGVVITGIPPGIKVSHEELVKELERRKGIPGLSTARSEPDNPIILSGIFRGYTTGTPIAVLFENKDVDSSYYEDIKDKPRPGHADYPARIKYFGYNDYRGGGHFSGRLTVGIVTAGYFAKKILEKYGIRIRAYIKRIGRVEAKQLTLEEILSSENPFCPDEEAFEKMVEEIELARREGDSVGGIVEVVAVNVPPGLGGPYEEDIEADLASAFFRIPAVKGVEFGLGFKVAEKRGSEVNDPYVIRDGKVVTKTNNHGGVLGGITTGMPIIARIAFKPTPSIYLPQRTVDLREMKEVEIKLRGRFDPSIVPRALPVVEGVMAFVLADHLLFRRVWELKSS.

Arg44 serves as a coordination point for NADP(+). Residues 121–123, Gly278, 293–297, and Arg320 each bind FMN; these read HFS and KPTPS.

The protein belongs to the chorismate synthase family. Requires FMNH2 as cofactor.

The enzyme catalyses 5-O-(1-carboxyvinyl)-3-phosphoshikimate = chorismate + phosphate. It participates in metabolic intermediate biosynthesis; chorismate biosynthesis; chorismate from D-erythrose 4-phosphate and phosphoenolpyruvate: step 7/7. Catalyzes the anti-1,4-elimination of the C-3 phosphate and the C-6 proR hydrogen from 5-enolpyruvylshikimate-3-phosphate (EPSP) to yield chorismate, which is the branch point compound that serves as the starting substrate for the three terminal pathways of aromatic amino acid biosynthesis. This reaction introduces a second double bond into the aromatic ring system. This Pyrococcus abyssi (strain GE5 / Orsay) protein is Chorismate synthase.